Reading from the N-terminus, the 193-residue chain is Oligoribonuclease (193 aa).

Residues 8 to 171 (LVWLDLEMTG…EDIRESVAEL (164 aa)) form the Exonuclease domain. Residue Tyr129 is part of the active site.

This sequence belongs to the oligoribonuclease family.

It is found in the cytoplasm. Its function is as follows. 3'-to-5' exoribonuclease specific for small oligoribonucleotides. The chain is Oligoribonuclease from Alkalilimnicola ehrlichii (strain ATCC BAA-1101 / DSM 17681 / MLHE-1).